Reading from the N-terminus, the 129-residue chain is Small ribosomal subunit protein uS11 (129 aa).

Belongs to the universal ribosomal protein uS11 family. In terms of assembly, part of the 30S ribosomal subunit. Interacts with proteins S7 and S18. Binds to IF-3.

In terms of biological role, located on the platform of the 30S subunit, it bridges several disparate RNA helices of the 16S rRNA. Forms part of the Shine-Dalgarno cleft in the 70S ribosome. This chain is Small ribosomal subunit protein uS11, found in Escherichia fergusonii (strain ATCC 35469 / DSM 13698 / CCUG 18766 / IAM 14443 / JCM 21226 / LMG 7866 / NBRC 102419 / NCTC 12128 / CDC 0568-73).